A 275-amino-acid chain; its full sequence is tRNA pseudouridine synthase A (275 aa).

Asp62 functions as the Nucleophile in the catalytic mechanism. Tyr124 is a substrate binding site.

Belongs to the tRNA pseudouridine synthase TruA family. As to quaternary structure, homodimer.

It carries out the reaction uridine(38/39/40) in tRNA = pseudouridine(38/39/40) in tRNA. Its function is as follows. Formation of pseudouridine at positions 38, 39 and 40 in the anticodon stem and loop of transfer RNAs. The sequence is that of tRNA pseudouridine synthase A from Herminiimonas arsenicoxydans.